A 252-amino-acid polypeptide reads, in one-letter code: Probable transcriptional regulatory protein Fnod_1106 (252 aa).

The protein belongs to the TACO1 family.

It is found in the cytoplasm. The sequence is that of Probable transcriptional regulatory protein Fnod_1106 from Fervidobacterium nodosum (strain ATCC 35602 / DSM 5306 / Rt17-B1).